Consider the following 301-residue polypeptide: Protoheme IX farnesyltransferase 1 (301 aa).

9 helical membrane passes run 29–49, 51–71, 101–121, 123–143, 150–170, 177–197, 223–243, 244–264, and 275–295; these read VVAL…PHAV, VQPL…AAAL, ALIF…SLVN, LTAW…TAYL, NIVI…TAVT, ALLL…ALAI, CILL…LVGM, CGPV…YKAW, and AMQV…ALLL.

This sequence belongs to the UbiA prenyltransferase family. Protoheme IX farnesyltransferase subfamily.

It localises to the cell inner membrane. The catalysed reaction is heme b + (2E,6E)-farnesyl diphosphate + H2O = Fe(II)-heme o + diphosphate. Its pathway is porphyrin-containing compound metabolism; heme O biosynthesis; heme O from protoheme: step 1/1. Converts heme B (protoheme IX) to heme O by substitution of the vinyl group on carbon 2 of heme B porphyrin ring with a hydroxyethyl farnesyl side group. The protein is Protoheme IX farnesyltransferase 1 of Shewanella baltica (strain OS185).